The chain runs to 539 residues: MAAKDVKFGNDARVKMLRGVNVLADAVKVTLGPKGRNVVLDKSFGAPTITKDGVSVAREIELEDKFENMGAQMVKEVASKANDAAGDGTTTATVLAQAIITEGLKAVAAGMNPMDLKRGIDKAVASAVEELKALSVPCSDSKAIAQVGTISANSDETVGKLIAEAMDKVGKEGVITVEDGTGLEDELDVVEGMQFDRGYLSPYFINKPETGAVELESPFILLADKKISNIREMLPVLEAVAKAGKPLVIIAEDVEGEALATLVVNTMRGIVKVAAVKAPGFGDRRKAMLQDIATLTGGTVISEEIGMELEKATLEDLGQAKRVVINKDTTTIIDGVGEEAAIQGRVGQIRKQIEEATSDYDREKLQERVAKLAGGVAVIKVGAATEVEMKEKKARVDDALHATRAAVEEGVVAGGGVALVRVAAKLAGLTAQNEDQNVGIKVALRAMEAPLRQIVSNAGEEPSVVANNVKAGEGNYGYNAATEEYGNMIDFGILDPTKVTRSALQYAASVAGLMITTECMVTDMPKGDAPDLXAAGMGG.

Residues 30-33 (TLGP), K51, 87-91 (DGTTT), G415, 479-481 (NAA), and D495 contribute to the ATP site.

This sequence belongs to the chaperonin (HSP60) family. In terms of assembly, forms a cylinder of 14 subunits composed of two heptameric rings stacked back-to-back. Interacts with the co-chaperonin GroES.

The protein resides in the cytoplasm. It carries out the reaction ATP + H2O + a folded polypeptide = ADP + phosphate + an unfolded polypeptide.. In terms of biological role, together with its co-chaperonin GroES, plays an essential role in assisting protein folding. The GroEL-GroES system forms a nano-cage that allows encapsulation of the non-native substrate proteins and provides a physical environment optimized to promote and accelerate protein folding. The sequence is that of Chaperonin GroEL from Enterobacter agglomerans (Erwinia herbicola).